The chain runs to 425 residues: Serine--tRNA ligase (425 aa).

Residue 230 to 232 (TAE) participates in L-serine binding. Position 261 to 263 (261 to 263 (RSE)) interacts with ATP. Position 284 (E284) interacts with L-serine. 348–351 (EISS) is an ATP binding site. S384 provides a ligand contact to L-serine.

The protein belongs to the class-II aminoacyl-tRNA synthetase family. Type-1 seryl-tRNA synthetase subfamily. Homodimer. The tRNA molecule binds across the dimer.

It is found in the cytoplasm. The catalysed reaction is tRNA(Ser) + L-serine + ATP = L-seryl-tRNA(Ser) + AMP + diphosphate + H(+). It carries out the reaction tRNA(Sec) + L-serine + ATP = L-seryl-tRNA(Sec) + AMP + diphosphate + H(+). Its pathway is aminoacyl-tRNA biosynthesis; selenocysteinyl-tRNA(Sec) biosynthesis; L-seryl-tRNA(Sec) from L-serine and tRNA(Sec): step 1/1. Catalyzes the attachment of serine to tRNA(Ser). Is also able to aminoacylate tRNA(Sec) with serine, to form the misacylated tRNA L-seryl-tRNA(Sec), which will be further converted into selenocysteinyl-tRNA(Sec). The sequence is that of Serine--tRNA ligase from Nitratidesulfovibrio vulgaris (strain DSM 19637 / Miyazaki F) (Desulfovibrio vulgaris).